Consider the following 254-residue polypeptide: Dihydroanticapsin 7-dehydrogenase (254 aa).

9-31 (LITGGASGIGYAAVQAFLNQQAN) provides a ligand contact to NAD(+). Serine 139 contributes to the substrate binding site. The Proton acceptor role is filled by tyrosine 152.

Belongs to the short-chain dehydrogenases/reductases (SDR) family.

The catalysed reaction is L-dihydroanticapsin + NAD(+) = L-anticapsin + NADH + H(+). It functions in the pathway antibiotic biosynthesis; bacilysin biosynthesis. In terms of biological role, part of the bacABCDEFG operon responsible for the biosynthesis of bacilysin, an irreversible inactivator of the glutaminase domain of glucosamine synthetase. Catalyzes the dehydrogenation of the C7-hydroxyl group in the 4S-tetrahydrotyrosine (4S-H4Tyr) to yield anticapsin (epoxycyclohexanonyl-Ala). In Bacillus amyloliquefaciens (Bacillus velezensis), this protein is Dihydroanticapsin 7-dehydrogenase.